A 114-amino-acid polypeptide reads, in one-letter code: UPF0342 protein NWMN_1737 (114 aa).

This sequence belongs to the UPF0342 family.

The polypeptide is UPF0342 protein NWMN_1737 (Staphylococcus aureus (strain Newman)).